A 367-amino-acid polypeptide reads, in one-letter code: Peptide chain release factor 2 (367 aa).

The residue at position 254 (Gln-254) is an N5-methylglutamine.

Belongs to the prokaryotic/mitochondrial release factor family. In terms of processing, methylated by PrmC. Methylation increases the termination efficiency of RF2.

The protein localises to the cytoplasm. Peptide chain release factor 2 directs the termination of translation in response to the peptide chain termination codons UGA and UAA. The chain is Peptide chain release factor 2 from Burkholderia cenocepacia (strain ATCC BAA-245 / DSM 16553 / LMG 16656 / NCTC 13227 / J2315 / CF5610) (Burkholderia cepacia (strain J2315)).